Consider the following 120-residue polypeptide: Succinate dehydrogenase assembly factor 3, mitochondrial (120 aa).

The N-terminal 36 residues, 1 to 36 (MSRILMSQLTHPQRVRLLYKTILRLHRGLPAELRAL), are a transit peptide targeting the mitochondrion.

This sequence belongs to the complex I LYR family. SDHAF3 subfamily. In terms of assembly, interacts with SdhB within an SdhA-SdhB subcomplex.

Its subcellular location is the mitochondrion matrix. Its function is as follows. Plays an essential role in the assembly of succinate dehydrogenase (SDH), an enzyme complex (also referred to as respiratory complex II) that is a component of both the tricarboxylic acid (TCA) cycle and the mitochondrial electron transport chain, and which couples the oxidation of succinate to fumarate with the reduction of ubiquinone (coenzyme Q) to ubiquinol. Promotes maturation of the iron-sulfur protein subunit SdhB of the SDH catalytic dimer, protecting it from the deleterious effects of oxidants. The sequence is that of Succinate dehydrogenase assembly factor 3, mitochondrial from Drosophila melanogaster (Fruit fly).